The primary structure comprises 383 residues: TOM1-like protein 2 (383 aa).

The VHS domain maps to 45-178 (ATLETLEEPN…GLHARGEENS (134 aa)). Positions 223 to 310 (LSIKDKKEQI…VLSSYKKPDE (88 aa)) constitute a GAT domain. The segment at 305 to 383 (YKKPDETEKK…LGLSSDEDEK (79 aa)) is disordered. Composition is skewed to basic and acidic residues over residues 306 to 316 (KKPDETEKKAS) and 339 to 354 (EPVKKTGADDDKKHSE). A phosphoserine mark is found at Ser-377 and Ser-378.

It belongs to the TOM1 family. In terms of tissue distribution, ubiquitously expressed.

The protein localises to the cytoplasm. It localises to the membrane. In terms of biological role, binds ubiquitin in vitro. Might contribute to the loading of the ESCRT machinery. In Arabidopsis thaliana (Mouse-ear cress), this protein is TOM1-like protein 2.